The following is a 342-amino-acid chain: Sorting nexin-15 (342 aa).

One can recognise a PX domain in the interval M1–R130. R51, S53, R87, and R96 together coordinate a 1,2-diacyl-sn-glycero-3-phospho-(1D-myo-inositol-3-phosphate). R105 is subject to Omega-N-methylarginine. Phosphoserine is present on residues S201 and S227. Positions D245–A267 are disordered. The MIT domain occupies T265–P342.

It belongs to the sorting nexin family. In terms of assembly, homodimer. Interacts with SNX1, SNX2 and SNX4. Widely expressed.

The protein resides in the cytoplasm. It localises to the membrane. The protein localises to the cytoplasmic vesicle membrane. May be involved in several stages of intracellular trafficking. Overexpression of SNX15 disrupts the normal trafficking of proteins from the plasma membrane to recycling endosomes or the TGN. The chain is Sorting nexin-15 (SNX15) from Homo sapiens (Human).